The following is a 471-amino-acid chain: 6-phosphofructo-2-kinase/fructose-2,6-bisphosphatase 1 (471 aa).

Ser-2 carries the N-acetylserine modification. A 6-phosphofructo-2-kinase region spans residues 2 to 250 (SREMGELTQT…AYYLMNIHVT (249 aa)). Position 33 is a phosphoserine; by PKA (Ser-33). 49–57 (GLPARGKTY) lines the ATP pocket. The beta-D-fructose 6-phosphate site is built by Arg-82 and Arg-105. Residue Asp-131 is part of the active site. Beta-D-fructose 6-phosphate-binding residues include Thr-133 and Arg-139. At Ser-141 the chain carries Phosphoserine. The active site involves Cys-161. Residue 170–175 (NIKQVK) participates in ATP binding. 3 residues coordinate beta-D-fructose 6-phosphate: Lys-175, Arg-196, and Tyr-200. Residues 251–471 (PRSIYLCRHG…EALDTVPAHY (221 aa)) are fructose-2,6-bisphosphatase. Arg-258 lines the beta-D-fructose 2,6-bisphosphate pocket. Catalysis depends on His-259, which acts as the Tele-phosphohistidine intermediate. Residues Asn-265, Gly-271, and Arg-308 each coordinate beta-D-fructose 2,6-bisphosphate. The active-site Proton donor/acceptor is the Glu-328. Beta-D-fructose 2,6-bisphosphate contacts are provided by Tyr-339, Arg-353, Lys-357, Tyr-368, Gln-394, and Arg-398. 350 to 353 (FALR) contributes to the ATP binding site. ATP contacts are provided by residues 394–398 (QAVMR) and Tyr-430.

The protein in the C-terminal section; belongs to the phosphoglycerate mutase family. In terms of assembly, homodimer. As to expression, liver.

It catalyses the reaction beta-D-fructose 2,6-bisphosphate + H2O = beta-D-fructose 6-phosphate + phosphate. The enzyme catalyses beta-D-fructose 6-phosphate + ATP = beta-D-fructose 2,6-bisphosphate + ADP + H(+). Phosphorylation at Ser-33 inhibits the kinase and activates the bisphosphatase. Functionally, synthesis and degradation of fructose 2,6-bisphosphate. This Mus musculus (Mouse) protein is 6-phosphofructo-2-kinase/fructose-2,6-bisphosphatase 1.